The sequence spans 406 residues: MARVFLFVLDSFGIGGAPDAEAFGDLGADTLGHIAEFCASGAGDRAGLREGPLQLPNMSALGLVHAAKLATGRLPAGMPLPERVYGVYGAASEVSRGKDTPSGHWEIAGTPVRFDWGYFPAEGDAFPPQLVEAICREGEVPGILGNCHASGTDIIARHGEEHMRSGKPICYTSSDSVFQIAAHERTFGLERLLELCQVVRRLVDDYNIGRVIARPFVGDNPGNFTRTGHRRDFSVLPPEPTILDRLEAAGRTVHAIGKIGDIFAHRGVTRLTKANGNMELFDASLTVVEEAEEGDLVFTNFVDFDMLYGHRRDVPGYAAALEAFDARLPDLDRRLRPGDMVILTADHGCDPTWRGTDHTRERVPVLMFGPSLRSRSFGIANSFAHIGETAARHLGIAPGPHGRSLL.

Residues D10, D305, H310, D346, H347, and H358 each contribute to the Mn(2+) site.

The protein belongs to the phosphopentomutase family. The cofactor is Mn(2+).

Its subcellular location is the cytoplasm. The catalysed reaction is 2-deoxy-alpha-D-ribose 1-phosphate = 2-deoxy-D-ribose 5-phosphate. The enzyme catalyses alpha-D-ribose 1-phosphate = D-ribose 5-phosphate. The protein operates within carbohydrate degradation; 2-deoxy-D-ribose 1-phosphate degradation; D-glyceraldehyde 3-phosphate and acetaldehyde from 2-deoxy-alpha-D-ribose 1-phosphate: step 1/2. Isomerase that catalyzes the conversion of deoxy-ribose 1-phosphate (dRib-1-P) and ribose 1-phosphate (Rib-1-P) to deoxy-ribose 5-phosphate (dRib-5-P) and ribose 5-phosphate (Rib-5-P), respectively. This Sinorhizobium fredii (strain NBRC 101917 / NGR234) protein is Phosphopentomutase.